The following is a 566-amino-acid chain: MQPIISFEQFTFQYGHAAQPTLSDITFHIYPGEKVLIAGRSGSGKSTLAHCINGLIPFSYEGNSTGNVLIAGKDPREGSIFEQSKQVGTILQDQDAQFIGLTVEEDVAFYLENECVKQDNMKKIVSDSLRKVKMHTFHKQSPHELSGGQKQTVSLAGLLTTNADILLFDEPLANLDPLSAIHTIELMKDIHEQYNKTIVIIEHRIEEIFKLDLDKVILIDEGKVIAMGTPKEILASNILPRIGLREPIYIEALKRLHFDSNNDVIYPMENLQKEKVSNVIKEWMEKQVILKRNAKNKELLKVENLSFSYPNKQKVLENVNLLIYEGEIVALLGHNGAGKSTLAHSLIGINKMKNGKIALKGEDISSWSIRKRGEIISYVMQNPNHMITQPTVFEEVSFTLTLHNFSKEEIKNKVEGILKICGLYPFRNWPIQALSYGQKKRLTIASVLTTNPKLIILDEPTAGQDYYHYKQFMSFIKNLAKKGISFVVITHDMNLALEYTDRAVVLHEGKIIADNTVFDVLGNQETLQRANLRESSLTKLIKFSGIACPEKFMELYLDSTRREEGA.

2 ABC transporter domains span residues 5 to 246 (ISFE…GLRE) and 300 to 533 (LKVE…ANLR). ATP is bound by residues 39 to 46 (GRSGSGKS) and 333 to 340 (GHNGAGKS).

It belongs to the ABC transporter superfamily.

The protein resides in the cell membrane. In terms of biological role, probably part of an ABC transporter complex. Responsible for energy coupling to the transport system. This chain is Putative ABC transporter ATP-binding protein BC_2655, found in Bacillus cereus (strain ATCC 14579 / DSM 31 / CCUG 7414 / JCM 2152 / NBRC 15305 / NCIMB 9373 / NCTC 2599 / NRRL B-3711).